The primary structure comprises 791 residues: RAS guanyl-releasing protein 1 (791 aa).

The region spanning 49–172 is the N-terminal Ras-GEF domain; the sequence is LGKLSKGASL…RLIDTAQINS (124 aa). Residues 53–106 are ras exchanger motif region; required for transforming activity; sequence SKGASLDELIQMCIQAFDLDGNMGQNNELLQIMLTMHGFLIPSTELLIKLRTLY. The Ras-GEF domain maps to 201–432; sequence EPQELAEHLT…YELSYAREPR (232 aa). 2 EF-hand domains span residues 466–501 and 502–528; these read HVQR…FPFS and FCVM…ASSI. Positions 479, 481, 483, 485, 490, 506, 508, 510, and 517 each coordinate Ca(2+). The Phorbol-ester/DAG-type zinc finger occupies 537–587; it reads LHNFQETTYLRPTFCDNCAGFLWGVIKQGYRCKDCGMNCHKQCKELVVFEC. Residues 671–715 are disordered; it reads TQTENETQSLCLQVPSPPRSRTPDLTSHLPISPMPSPCPSPVPTR. Polar residues predominate over residues 672 to 681; the sequence is QTENETQSLC. A compositionally biased stretch (pro residues) spans 702 to 712; that stretch reads SPMPSPCPSPV. The stretch at 728-783 forms a coiled coil; it reads IRKARAELRGGKAGIQELEKEKVFLKEENTALKIQLKDAHRRVETLRAELRKYVLD.

Belongs to the RASGRP family.

It is found in the cytoplasm. The protein localises to the cytosol. The protein resides in the cell membrane. Its subcellular location is the golgi apparatus membrane. It localises to the endoplasmic reticulum membrane. Regulated by F-actin polymerization and probably by calcium. Functions as a diacylglycerol (DAG)-regulated nucleotide exchange factor specifically activating Ras through the exchange of bound GDP for GTP. The protein is RAS guanyl-releasing protein 1 (rasgrp1) of Xenopus laevis (African clawed frog).